Consider the following 700-residue polypeptide: Elongation factor G (700 aa).

Positions threonine 10–leucine 286 constitute a tr-type G domain. GTP-binding positions include alanine 19–threonine 26, aspartate 83–histidine 87, and asparagine 137–aspartate 140.

The protein belongs to the TRAFAC class translation factor GTPase superfamily. Classic translation factor GTPase family. EF-G/EF-2 subfamily.

It is found in the cytoplasm. Functionally, catalyzes the GTP-dependent ribosomal translocation step during translation elongation. During this step, the ribosome changes from the pre-translocational (PRE) to the post-translocational (POST) state as the newly formed A-site-bound peptidyl-tRNA and P-site-bound deacylated tRNA move to the P and E sites, respectively. Catalyzes the coordinated movement of the two tRNA molecules, the mRNA and conformational changes in the ribosome. The sequence is that of Elongation factor G from Mycolicibacterium vanbaalenii (strain DSM 7251 / JCM 13017 / BCRC 16820 / KCTC 9966 / NRRL B-24157 / PYR-1) (Mycobacterium vanbaalenii).